Consider the following 105-residue polypeptide: Neuropeptide-like protein 32 (105 aa).

The first 22 residues, 1–22 (MRQFNLLLVFCLIALTALPVFS), serve as a signal peptide directing secretion. Positions 23–54 (FPNGLTMDSIDMEPMGAFDENGAADESPRVKR) are excised as a propeptide. At Gly-59 the chain carries Glycine amide. A Tryptophan amide modification is found at Trp-64. A glycine amide mark is found at Gly-68, Gly-73, and Gly-80. Position 86 is a tryptophan amide (Trp-86). Glycine amide occurs at positions 91 and 98. Trp-103 bears the Tryptophan amide mark.

This sequence belongs to the YARP (YGGW-amide related peptide) family.

It localises to the secreted. In terms of biological role, may have antimicrobial activity. This chain is Neuropeptide-like protein 32 (nlp-32), found in Caenorhabditis elegans.